The sequence spans 72 residues: Nod factor export ATP-binding protein I (72 aa).

This sequence belongs to the ABC transporter superfamily. Lipooligosaccharide exporter (TC 3.A.1.102) family. In terms of assembly, the complex is composed of two ATP-binding proteins (NodI) and two transmembrane proteins (NodJ).

The protein localises to the cell inner membrane. Part of the ABC transporter complex NodIJ involved in the export of the nodulation factors (Nod factors), the bacterial signal molecules that induce symbiosis and subsequent nodulation induction. Nod factors are LCO (lipo-chitin oligosaccharide), a modified beta-1,4-linked N-acetylglucosamine oligosaccharide. This subunit is responsible for energy coupling to the transport system. The protein is Nod factor export ATP-binding protein I of Rhizobium leguminosarum bv. trifolii.